We begin with the raw amino-acid sequence, 449 residues long: Heterogeneous nuclear ribonucleoprotein H2 (449 aa).

Methionine 1 carries the N-acetylmethionine modification. Methionine 2 carries the N-acetylmethionine; in Heterogeneous nuclear ribonucleoprotein H2, N-terminally processed modification. Positions 11-90 (FVVKVRGLPW…RYVEVFKSNS (80 aa)) constitute an RRM 1 domain. Serine 23 carries the phosphoserine modification. Residue lysine 35 forms a Glycyl lysine isopeptide (Lys-Gly) (interchain with G-Cter in SUMO2) linkage. Phosphoserine is present on residues serine 54 and serine 63. Residue lysine 87 forms a Glycyl lysine isopeptide (Lys-Gly) (interchain with G-Cter in SUMO2) linkage. Position 90 is a phosphoserine (serine 90). Residue lysine 98 forms a Glycyl lysine isopeptide (Lys-Gly) (interchain with G-Cter in SUMO2) linkage. The RRM 2 domain occupies 111–188 (GFVRLRGLPF…RYIEIFKSSR (78 aa)). Arginine 233 is subject to Dimethylated arginine; alternate. Arginine 233 is modified (omega-N-methylarginine; alternate). A 1-1 repeat occupies 234–249 (GAYGGGYGGYDDYGGY). The tract at residues 234–433 (GAYGGGYGGY…YGGQSSMSGY (200 aa)) is 2 X 16 AA Gly-rich approximate repeats. Phosphotyrosine is present on tyrosine 246. An RRM 3 domain is found at 289–364 (HCVHMRGLPY…RYVELFLNST (76 aa)). At serine 310 the chain carries Phosphoserine. 3 consecutive repeat copies span residues 354-372 (HRYVELFLNSTAGTSGGAY), 374-392 (HSYVELFLNSTAGASGGAY), and 418-433 (GGYGGGYGGQSSMSGY). The tract at residues 354-392 (HRYVELFLNSTAGTSGGAYDHSYVELFLNSTAGASGGAY) is 2 X 19 AA perfect repeats.

As to quaternary structure, component of a ribonucleoprotein complex containing mRNAs and RNA-binding proteins including DDX5, HNRNPH2 and SRSF1 as well as splicing regulator ARVCF. Interacts with TXNL4/DIM1.

The protein resides in the nucleus. The protein localises to the nucleoplasm. This protein is a component of the heterogeneous nuclear ribonucleoprotein (hnRNP) complexes which provide the substrate for the processing events that pre-mRNAs undergo before becoming functional, translatable mRNAs in the cytoplasm. Binds poly(RG). In Mus musculus (Mouse), this protein is Heterogeneous nuclear ribonucleoprotein H2 (Hnrnph2).